A 946-amino-acid chain; its full sequence is Bifunctional glutamine synthetase adenylyltransferase/adenylyl-removing enzyme (946 aa).

The adenylyl removase stretch occupies residues M1–E440. The interval S449–E946 is adenylyl transferase.

This sequence belongs to the GlnE family. Mg(2+) serves as cofactor.

It catalyses the reaction [glutamine synthetase]-O(4)-(5'-adenylyl)-L-tyrosine + phosphate = [glutamine synthetase]-L-tyrosine + ADP. It carries out the reaction [glutamine synthetase]-L-tyrosine + ATP = [glutamine synthetase]-O(4)-(5'-adenylyl)-L-tyrosine + diphosphate. Its function is as follows. Involved in the regulation of glutamine synthetase GlnA, a key enzyme in the process to assimilate ammonia. When cellular nitrogen levels are high, the C-terminal adenylyl transferase (AT) inactivates GlnA by covalent transfer of an adenylyl group from ATP to specific tyrosine residue of GlnA, thus reducing its activity. Conversely, when nitrogen levels are low, the N-terminal adenylyl removase (AR) activates GlnA by removing the adenylyl group by phosphorolysis, increasing its activity. The regulatory region of GlnE binds the signal transduction protein PII (GlnB) which indicates the nitrogen status of the cell. The chain is Bifunctional glutamine synthetase adenylyltransferase/adenylyl-removing enzyme from Shigella sonnei (strain Ss046).